A 225-amino-acid polypeptide reads, in one-letter code: Protein-L-isoaspartate O-methyltransferase (225 aa).

Ser63 is a catalytic residue.

The protein belongs to the methyltransferase superfamily. L-isoaspartyl/D-aspartyl protein methyltransferase family.

It is found in the cytoplasm. It catalyses the reaction [protein]-L-isoaspartate + S-adenosyl-L-methionine = [protein]-L-isoaspartate alpha-methyl ester + S-adenosyl-L-homocysteine. Functionally, catalyzes the methyl esterification of L-isoaspartyl residues in peptides and proteins that result from spontaneous decomposition of normal L-aspartyl and L-asparaginyl residues. It plays a role in the repair and/or degradation of damaged proteins. The sequence is that of Protein-L-isoaspartate O-methyltransferase from Staphylothermus marinus (strain ATCC 43588 / DSM 3639 / JCM 9404 / F1).